Here is a 200-residue protein sequence, read N- to C-terminus: Small ribosomal subunit protein uS4 (200 aa).

The disordered stretch occupies residues 22 to 43 (TGKELERRPYAPGQHGPTQRKK). An S4 RNA-binding domain is found at 92-170 (QRLDNIVYRL…VPEYVTFDAE (79 aa)).

It belongs to the universal ribosomal protein uS4 family. As to quaternary structure, part of the 30S ribosomal subunit. Contacts protein S5. The interaction surface between S4 and S5 is involved in control of translational fidelity.

In terms of biological role, one of the primary rRNA binding proteins, it binds directly to 16S rRNA where it nucleates assembly of the body of the 30S subunit. Its function is as follows. With S5 and S12 plays an important role in translational accuracy. The sequence is that of Small ribosomal subunit protein uS4 from Listeria welshimeri serovar 6b (strain ATCC 35897 / DSM 20650 / CCUG 15529 / CIP 8149 / NCTC 11857 / SLCC 5334 / V8).